Here is a 148-residue protein sequence, read N- to C-terminus: Protein MGF 360-18R (148 aa).

It belongs to the asfivirus MGF 360 family.

In terms of biological role, plays a role in virus cell tropism, and may be required for efficient virus replication in macrophages. This is Protein MGF 360-18R from African swine fever virus (strain Badajoz 1971 Vero-adapted) (Ba71V).